We begin with the raw amino-acid sequence, 164 residues long: MQTPKLAILLALAMAAAMVNLSQAQNSPQDYVSPHNAARSAVGVGAVSWSTKLQAFAQNYANQRINDCKLQHSGGPYGENIFWGSAGADWKAADAVNSWVNEKKDYNYGSNTCAAGKVCGHYTQVVWRASTSIGCARVVCNNNRGVFITCNYEPRGNIVGQKPY.

The first 24 residues, 1-24 (MQTPKLAILLALAMAAAMVNLSQA), serve as a signal peptide directing secretion. Glutamine 25 carries the pyrrolidone carboxylic acid modification. The SCP domain occupies 34-152 (PHNAARSAVG…NRGVFITCNY (119 aa)). 3 cysteine pairs are disulfide-bonded: cysteine 68-cysteine 140, cysteine 113-cysteine 119, and cysteine 135-cysteine 150.

It belongs to the CRISP family.

Probably involved in the defense reaction of plants against pathogens. The chain is Pathogenesis-related protein PRB1-2 from Hordeum vulgare (Barley).